We begin with the raw amino-acid sequence, 159 residues long: SsrA-binding protein (159 aa).

This sequence belongs to the SmpB family.

Its subcellular location is the cytoplasm. Its function is as follows. Required for rescue of stalled ribosomes mediated by trans-translation. Binds to transfer-messenger RNA (tmRNA), required for stable association of tmRNA with ribosomes. tmRNA and SmpB together mimic tRNA shape, replacing the anticodon stem-loop with SmpB. tmRNA is encoded by the ssrA gene; the 2 termini fold to resemble tRNA(Ala) and it encodes a 'tag peptide', a short internal open reading frame. During trans-translation Ala-aminoacylated tmRNA acts like a tRNA, entering the A-site of stalled ribosomes, displacing the stalled mRNA. The ribosome then switches to translate the ORF on the tmRNA; the nascent peptide is terminated with the 'tag peptide' encoded by the tmRNA and targeted for degradation. The ribosome is freed to recommence translation, which seems to be the essential function of trans-translation. The protein is SsrA-binding protein of Coxiella burnetii (strain RSA 493 / Nine Mile phase I).